A 317-amino-acid chain; its full sequence is Testis-expressed protein 19.2 (317 aa).

The span at 64–75 shows a compositional bias: acidic residues; the sequence is MELSEASSEPEE. Residues 64–113 are disordered; that stretch reads MELSEASSEPEEWPGLSGGEGQGHLPHGISVSAGSGAQGPQPVPTELGPQ. Positions 101–145 are important for interaction with piRNA; that stretch reads QGPQPVPTELGPQEAVPLDLGPEDAEWTQALPWRFDGLSPCSHWL.

In terms of assembly, interacts with UBR2. Interacts with piRNA-associated proteins DDX4, EDC4, MAEL, PIWIL1, PIWIL2, RANBP9 and TDRD6. Specifically expressed in somatic cells of male gonad lineage.

The protein localises to the cytoplasm. Its function is as follows. May be required during spermatogenesis, probably by participating in the repression of retrotransposable elements and prevent their mobilization. With its paralog, Tex19.1, collaborates with the Piwi-interacting RNA (piRNA) pathway, which mediates the repression of transposable elements during meiosis by forming complexes composed of piRNAs and Piwi proteins. Interacts with Piwi proteins and directly binds piRNAs, a class of 24 to 30 nucleotide RNAs that are generated by a Dicer-independent mechanism and are primarily derived from transposons and other repeated sequence elements. This chain is Testis-expressed protein 19.2 (Tex19.2), found in Mus musculus (Mouse).